Reading from the N-terminus, the 945-residue chain is Poly [ADP-ribose] polymerase 1 (945 aa).

The PARP-type 1 zinc-finger motif lies at 10 to 96 (YAIEYAKSGR…KLRQEIQHFK (87 aa)). Positions 22, 25, 54, and 57 each coordinate Zn(2+). The PARP-type 2; degenerate zinc-finger motif lies at 117 to 183 (IKTEKSLSNR…DYEENFKIKA (67 aa)). The segment at 195–251 (RRSTEPATPASASPTPPEAETPVLSAEGSPESSNKRPASSEIIEIDGEGNPDENDFA) is disordered. Positions 237–248 (IEIDGEGNPDEN) are enriched in acidic residues. The 140-residue stretch at 258 to 397 (KEARLMEVQK…NQMSERLYIG (140 aa)) folds into the PADR1 zinc-binding domain. The tract at residues 324–369 (GCPIICQTCSNGKIVYNSSCRTYVCTGYATEYSKCTYESKNPIRTP) is zinc ribbon. Residues Cys-329, Cys-332, Cys-348, and Cys-358 each contribute to the Zn(2+) site. In terms of domain architecture, WGR spans 464-563 (RCHVFKNEID…KHFRKMPGMF (100 aa)). Positions 586–704 (KTLLPKSVKE…DIKFAYDQIS (119 aa)) constitute a PARP alpha-helical domain. A PARP catalytic domain is found at 717 to 945 (DPVDINYQKL…RVKMHHARHL (229 aa)).

This sequence belongs to the ARTD/PARP family.

It is found in the nucleus. It catalyses the reaction NAD(+) + (ADP-D-ribosyl)n-acceptor = nicotinamide + (ADP-D-ribosyl)n+1-acceptor + H(+).. It carries out the reaction L-aspartyl-[protein] + NAD(+) = 4-O-(ADP-D-ribosyl)-L-aspartyl-[protein] + nicotinamide. The enzyme catalyses L-glutamyl-[protein] + NAD(+) = 5-O-(ADP-D-ribosyl)-L-glutamyl-[protein] + nicotinamide. Its activity is regulated as follows. Inhibited by N-(6-oxo-5,6-dihydrophenanthridin-2-yl)-N,N-dimethylacetamide HCl (PJ34), 1,5-dihydroxyisoquinoline (DHQ) and 3-aminobenzamide (3AB). In terms of biological role, poly[ADP-ribose] polymerase modifies various nuclear proteins by poly(ADP-ribosyl)ation, a post-translational modification synthesized after DNA damage that appears as an obligatory step in a detection/signaling pathway leading to the reparation of DNA strand breaks and programmed cell death. Involved in protection of the genome against mutations. This is Poly [ADP-ribose] polymerase 1 from Caenorhabditis elegans.